The sequence spans 467 residues: MAIFLIIFVVFFGFCILSTPLFRWIDIVYNKKNLPPGTMGWPIFGETREFLNQGPNFMKNQRARYGNFFKSHILGCPTVVSMDAGLNVYILNNEAKGLIPGYPQSMLDILGKCNIAAVHGATHKYIRGALLSLINPTMIKDHILPKIDKFMRSHLSGWDNCNVIDIQQMTKEMAFFSSLDQIGGFATSSSIAQEFRAGFLNIALGTISLPINFPTTNYYRGLQGRKTIVKLLRKIIEDRRGSKKIQQDMLGLMMNEEAKNRYTLSDEELIDQIITIMYSGFETVSTTSMMAVKYLHDHPKALEEIRKEHFAIREKKSLEDPIDYNDFKAMRFTRAVIYETLRLATIVNGVLRKTTQDMELNGYMIPKGWRIYVYTRELNYDPLIYPDPYTFNPWRWLENNLDHQSSFLMFGGGTRLCPGKELGVAEISTFLHYFVTRYRWEEVGGNKLMKFPRVEALNGLWIKVSAY.

A helical transmembrane segment spans residues 2–22; that stretch reads AIFLIIFVVFFGFCILSTPLF. Residue C417 participates in heme binding.

This sequence belongs to the cytochrome P450 family. Heme serves as cofactor. Expressed in fruits.

Its subcellular location is the membrane. It carries out the reaction 6-deoxocastasterone + reduced [NADPH--hemoprotein reductase] + O2 = 6alpha-hydroxycastasterone + oxidized [NADPH--hemoprotein reductase] + H2O + H(+). The enzyme catalyses 6alpha-hydroxycastasterone + reduced [NADPH--hemoprotein reductase] + O2 = castasterone + oxidized [NADPH--hemoprotein reductase] + 2 H2O + H(+). The catalysed reaction is castasterone + reduced [NADPH--hemoprotein reductase] + O2 = brassinolide + oxidized [NADPH--hemoprotein reductase] + H2O + H(+). It catalyses the reaction 6-deoxocastasterone + 2 reduced [NADPH--hemoprotein reductase] + 2 O2 = castasterone + 2 oxidized [NADPH--hemoprotein reductase] + 3 H2O + 2 H(+). Its pathway is plant hormone biosynthesis; brassinosteroid biosynthesis. In terms of biological role, catalyzes the C6-oxidation step in brassinosteroids biosynthesis. Converts 6-deoxocastasterone (6-deoxoCS) to castasterone (CS), and castasterone (CS) to brassinolide (BL). In Solanum lycopersicum (Tomato), this protein is Cytochrome P450 85A3.